A 613-amino-acid polypeptide reads, in one-letter code: MTTENGAVELGSQSLSTEQTPKAAAGDGPSASEKEPSAPATEKDLSPPNAKKDPGAPDPKNNPDPPSLKKDPAKAPGPEKKGDPVPASASSQGPSGEGDGGGGPAEGSEGPPAALPLPTATAEASIQKLDPTQAPSGNQGSGEAKAGKKAAECREAGRRGSPAFLHSPSCPAIISCSEKTLAVKPLSETTDLVFTGVSVTPDPQDPGPVKAGGTNALAEKKKEEAEKASGQAGQAKVQGDTPQRIGFQAVPSERVEVGQALCLTAREEDCFQILDDCPPPPAPFPHRIVELRTGNVNSEFSMNSKEALGGGKFGAVCTCTERATGLKLAAKVIKKQTPKDKEMVLLEIEVMNQLNHRNLIQLYAAIETSHEIILFMEYIEGGELFERIVDEDYHLTEVDTMVFVRQICDGILFMHKMRVLHLDLKPENILCVNTTGHLVKIIDFGLARRYNPNEKLKVNFGTPEFLSPEVVNYDQISDKTDMWSLGVITYMLLSGLSPFLGDDDTETLNNVLSANWYFDEETFEAVSDEAKDFVSNLLTKDQSARMSAEQCLAHPWLNNLAEKAKRCNRRLKSQILLKKYLMKRRWKKNFIAVSAANRFKKISSSGALMALGV.

Residues 1–20 (MTTENGAVELGSQSLSTEQT) are compositionally biased toward polar residues. Positions 1-168 (MTTENGAVEL…RGSPAFLHSP (168 aa)) are disordered. The span at 32-55 (SEKEPSAPATEKDLSPPNAKKDPG) shows a compositional bias: basic and acidic residues. Residues 56–66 (APDPKNNPDPP) show a composition bias toward pro residues. Positions 67–83 (SLKKDPAKAPGPEKKGD) are enriched in basic and acidic residues. Residues 95 to 105 (SGEGDGGGGPA) are compositionally biased toward gly residues. Residues 106 to 122 (EGSEGPPAALPLPTATA) are compositionally biased toward low complexity. The segment covering 145-158 (KAGKKAAECREAGR) has biased composition (basic and acidic residues). Phosphoserine occurs at positions 161, 167, and 169. Residues 219–240 (EKKKEEAEKASGQAGQAKVQGD) are disordered. Residues 302–557 (MNSKEALGGG…AEQCLAHPWL (256 aa)) form the Protein kinase domain. ATP-binding positions include 308–316 (LGGGKFGAV) and K331. Catalysis depends on D423, which acts as the Proton acceptor. T462 bears the Phosphothreonine mark. The interval 591–603 (IAVSAANRFKKIS) is calmodulin-binding.

Belongs to the protein kinase superfamily. CAMK Ser/Thr protein kinase family. As to quaternary structure, may interact with centrin.

The protein resides in the cytoplasm. The catalysed reaction is L-seryl-[myosin light chain] + ATP = O-phospho-L-seryl-[myosin light chain] + ADP + H(+). It carries out the reaction L-threonyl-[myosin light chain] + ATP = O-phospho-L-threonyl-[myosin light chain] + ADP + H(+). Functionally, implicated in the level of global muscle contraction and cardiac function. Phosphorylates a specific serine in the N-terminus of a myosin light chain. In Mus musculus (Mouse), this protein is Myosin light chain kinase 2, skeletal/cardiac muscle (Mylk2).